We begin with the raw amino-acid sequence, 374 residues long: Queuine tRNA-ribosyltransferase (374 aa).

The Proton acceptor role is filled by Asp89. Residues 89–93, Asp143, Gln187, and Gly214 each bind substrate; that span reads DSGGF. The segment at 245 to 251 is RNA binding; the sequence is GVGKPED. Asp264 serves as the catalytic Nucleophile. The RNA binding; important for wobble base 34 recognition stretch occupies residues 269 to 273; it reads TRNAR. The Zn(2+) site is built by Cys302, Cys304, Cys307, and His333.

Belongs to the queuine tRNA-ribosyltransferase family. In terms of assembly, homodimer. Within each dimer, one monomer is responsible for RNA recognition and catalysis, while the other monomer binds to the replacement base PreQ1. Zn(2+) is required as a cofactor.

It catalyses the reaction 7-aminomethyl-7-carbaguanine + guanosine(34) in tRNA = 7-aminomethyl-7-carbaguanosine(34) in tRNA + guanine. It functions in the pathway tRNA modification; tRNA-queuosine biosynthesis. Its function is as follows. Catalyzes the base-exchange of a guanine (G) residue with the queuine precursor 7-aminomethyl-7-deazaguanine (PreQ1) at position 34 (anticodon wobble position) in tRNAs with GU(N) anticodons (tRNA-Asp, -Asn, -His and -Tyr). Catalysis occurs through a double-displacement mechanism. The nucleophile active site attacks the C1' of nucleotide 34 to detach the guanine base from the RNA, forming a covalent enzyme-RNA intermediate. The proton acceptor active site deprotonates the incoming PreQ1, allowing a nucleophilic attack on the C1' of the ribose to form the product. After dissociation, two additional enzymatic reactions on the tRNA convert PreQ1 to queuine (Q), resulting in the hypermodified nucleoside queuosine (7-(((4,5-cis-dihydroxy-2-cyclopenten-1-yl)amino)methyl)-7-deazaguanosine). This Shewanella oneidensis (strain ATCC 700550 / JCM 31522 / CIP 106686 / LMG 19005 / NCIMB 14063 / MR-1) protein is Queuine tRNA-ribosyltransferase.